We begin with the raw amino-acid sequence, 116 residues long: Large ribosomal subunit protein bL19 (116 aa).

Belongs to the bacterial ribosomal protein bL19 family.

Functionally, this protein is located at the 30S-50S ribosomal subunit interface and may play a role in the structure and function of the aminoacyl-tRNA binding site. The sequence is that of Large ribosomal subunit protein bL19 from Pseudomonas entomophila (strain L48).